An 89-amino-acid polypeptide reads, in one-letter code: Small ribosomal subunit protein uS17 (89 aa).

The protein belongs to the universal ribosomal protein uS17 family. Part of the 30S ribosomal subunit.

One of the primary rRNA binding proteins, it binds specifically to the 5'-end of 16S ribosomal RNA. This chain is Small ribosomal subunit protein uS17, found in Xanthomonas campestris pv. campestris (strain B100).